We begin with the raw amino-acid sequence, 156 residues long: Toxin Res (156 aa).

This sequence belongs to the MbcT/ParT/Res family. Homodimer. Forms a complex with cognate antitoxin Xre.

In terms of biological role, toxic component of a type II toxin-antitoxin (TA) system. Expression in E.coli inhibits cell growth; bacteriostasis is neutralized by expression of cognate antitoxin Xre. Expression in E.coli leads to almost complete depletion of intracellular NAD(+): NAD(+) levels are partially restored when coexpressed with antitoxin Xre. The sequence is that of Toxin Res from Photorhabdus laumondii subsp. laumondii (strain DSM 15139 / CIP 105565 / TT01) (Photorhabdus luminescens subsp. laumondii).